We begin with the raw amino-acid sequence, 87 residues long: Serine rich endogenous peptide 17 (87 aa).

A signal peptide spans 1-28 (MTGKAPFFVILIAALLLLSSFFFGEVKA). The interval 32 to 87 (KQPKHRKLGNREGDENRSNEIVVQMKARVKRSKSKRGPQKKEPYKKPPCSPPTHPA) is disordered. A compositionally biased stretch (basic and acidic residues) spans 40–49 (GNREGDENRS). The SCOOP motif motif lies at 51–71 (EIVVQMKARVKRSKSKRGPQK). Residues 58 to 69 (ARVKRSKSKRGP) show a composition bias toward basic residues. A SxS motif essential for MIK2 binding motif is present at residues 63–65 (SKS). A compositionally biased stretch (pro residues) spans 77 to 87 (KPPCSPPTHPA).

Belongs to the serine rich endogenous peptide (SCOOP) phytocytokine family. Interacts with MIK2 (via extracellular leucine-rich repeat domain); this interaction triggers the formation of complex between MIK2 and the BAK1/SERK3 and SERK4 coreceptors, and subsequent BAK1 activation by phosphorylation.

It localises to the cell membrane. It is found in the secreted. Its subcellular location is the extracellular space. The protein localises to the apoplast. Brassicaceae-specific phytocytokine (plant endogenous peptide released into the apoplast) perceived by MIK2 in a BAK1/SERK3 and SERK4 coreceptors-dependent manner, that modulates various physiological and antimicrobial processes including growth prevention and reactive oxygen species (ROS) response regulation. This chain is Serine rich endogenous peptide 17, found in Arabidopsis thaliana (Mouse-ear cress).